A 149-amino-acid chain; its full sequence is Mediator of RNA polymerase II transcription subunit 9 (149 aa).

Residues 18–64 are disordered; the sequence is TNPTLDKPNAEATKEEFSSAENRDEKDYLTNQQPKNLSTPSTSSNGE. The span at 25-45 shows a compositional bias: basic and acidic residues; sequence PNAEATKEEFSSAENRDEKDY. Over residues 46–63 the composition is skewed to polar residues; the sequence is LTNQQPKNLSTPSTSSNG. 2 consecutive short sequence motifs (nuclear localization signal) follow at residues 77-99 and 136-149; these read RKDP…HRLK and KRDV…KLQR.

It belongs to the Mediator complex subunit 9 family. In terms of assembly, component of the Mediator complex, which is composed of at least 21 subunits that form three structurally distinct submodules. The Mediator head module contains MED6, MED8, MED11, SRB4/MED17, SRB5/MED18, ROX3/MED19, SRB2/MED20 and SRB6/MED22, the middle module contains MED1, MED4, NUT1/MED5, MED7, CSE2/MED9, NUT2/MED10, SRB7/MED21 and SOH1/MED31, and the tail module contains MED2, PGD1/MED3, RGR1/MED14, GAL11/MED15 and SIN4/MED16. The head and the middle modules interact directly with RNA polymerase II, whereas the elongated tail module interacts with gene-specific regulatory proteins. CSE2/MED9 interacts directly with MED4.

Its subcellular location is the nucleus. In terms of biological role, component of the Mediator complex, a coactivator involved in the regulated transcription of nearly all RNA polymerase II-dependent genes. Mediator functions as a bridge to convey information from gene-specific regulatory proteins to the basal RNA polymerase II transcription machinery. The Mediator complex, having a compact conformation in its free form, is recruited to promoters by direct interactions with regulatory proteins and serves for the assembly of a functional preinitiation complex with RNA polymerase II and the general transcription factors. The Mediator complex unfolds to an extended conformation and partially surrounds RNA polymerase II, specifically interacting with the unphosphorylated form of the C-terminal domain (CTD) of RNA polymerase II. The Mediator complex dissociates from the RNA polymerase II holoenzyme and stays at the promoter when transcriptional elongation begins. The chain is Mediator of RNA polymerase II transcription subunit 9 (CSE2) from Saccharomyces cerevisiae (strain ATCC 204508 / S288c) (Baker's yeast).